Reading from the N-terminus, the 461-residue chain is tRNA modification GTPase MnmE (461 aa).

Residues Arg-23, Glu-88, and Arg-127 each contribute to the (6S)-5-formyl-5,6,7,8-tetrahydrofolate site. The 160-residue stretch at Gly-223–Tyr-382 folds into the TrmE-type G domain. Asn-233 contacts K(+). GTP-binding positions include Asn-233 to Ser-238, Thr-252 to Thr-258, and Asp-277 to Gly-280. A Mg(2+)-binding site is contributed by Ser-237. Residues Thr-252, Val-254, and Thr-257 each coordinate K(+). Mg(2+) is bound at residue Thr-258. Lys-461 lines the (6S)-5-formyl-5,6,7,8-tetrahydrofolate pocket.

Belongs to the TRAFAC class TrmE-Era-EngA-EngB-Septin-like GTPase superfamily. TrmE GTPase family. As to quaternary structure, homodimer. Heterotetramer of two MnmE and two MnmG subunits. K(+) is required as a cofactor.

It localises to the cytoplasm. Functionally, exhibits a very high intrinsic GTPase hydrolysis rate. Involved in the addition of a carboxymethylaminomethyl (cmnm) group at the wobble position (U34) of certain tRNAs, forming tRNA-cmnm(5)s(2)U34. The protein is tRNA modification GTPase MnmE of Alkaliphilus oremlandii (strain OhILAs) (Clostridium oremlandii (strain OhILAs)).